The primary structure comprises 185 residues: MAYIYGDTMKIDTTGASEATAKQDKLTIKGVEAPKKLAEHDLARGEKYKNMITKVGKAKKMDPAVIAAMISRESRAGAVLKNGWEPAGNGFGLMQVDKRSHTPVGAWDSEQHVTQATEILIGFIKEIKVNFPKWTQEQCFKGGIAAYNKGVSRVTSYENIDVKTTGLDYSSDVVARAQWFRSKGY.

Residue E73 is part of the active site.

The protein belongs to the glycosyl hydrolase 23 family.

The enzyme catalyses Hydrolysis of (1-&gt;4)-beta-linkages between N-acetylmuramic acid and N-acetyl-D-glucosamine residues in a peptidoglycan and between N-acetyl-D-glucosamine residues in chitodextrins.. The polypeptide is Lysozyme g (Cyprinus carpio (Common carp)).